The primary structure comprises 384 residues: Aurora kinase (384 aa).

2 stretches are compositionally biased toward polar residues: residues 1 to 12 (MSYPNNKENSNN) and 19 to 29 (SVPSKQPQRVL). The segment at 1–100 (MSYPNNKENS…SSSSSSSQSV (100 aa)) is disordered. Over residues 30 to 99 (QQQNTNINNH…SSSSSSSSQS (70 aa)) the composition is skewed to low complexity. The region spanning 110–360 (FDIGKLLGMG…LKDVINHPWI (251 aa)) is the Protein kinase domain. ATP is bound by residues 116–124 (LGMGRFGHV) and K139. Catalysis depends on D233, which acts as the Proton acceptor.

The protein belongs to the protein kinase superfamily. Ser/Thr protein kinase family. Aurora subfamily. As to quaternary structure, interacts with icpA. Forms a complex at the central spindle.

The protein localises to the cytoplasm. The protein resides in the chromosome. It is found in the centromere. It localises to the cytoskeleton. Its subcellular location is the spindle pole. The protein localises to the cleavage furrow. The protein resides in the cell projection. It is found in the neuron projection. The enzyme catalyses L-seryl-[protein] + ATP = O-phospho-L-seryl-[protein] + ADP + H(+). The catalysed reaction is L-threonyl-[protein] + ATP = O-phospho-L-threonyl-[protein] + ADP + H(+). Functionally, part of a chromosomal passenger complex. This Dictyostelium discoideum (Social amoeba) protein is Aurora kinase (aurK).